Consider the following 150-residue polypeptide: Probable NADH dehydrogenase [ubiquinone] 1 alpha subcomplex subunit 5 (150 aa).

This sequence belongs to the complex I NDUFA5 subunit family. In terms of assembly, complex I is composed of 45 different subunits.

Its subcellular location is the mitochondrion inner membrane. In terms of biological role, accessory subunit of the mitochondrial membrane respiratory chain NADH dehydrogenase (Complex I), that is believed not to be involved in catalysis. Complex I functions in the transfer of electrons from NADH to the respiratory chain. The immediate electron acceptor for the enzyme is believed to be ubiquinone. The chain is Probable NADH dehydrogenase [ubiquinone] 1 alpha subcomplex subunit 5 from Caenorhabditis elegans.